The following is a 632-amino-acid chain: MAEETQHNKLAAAKKKLKEYWQKNSPRVPAGANRNRKTNGSIPQTATSGGCQPPGDSATGFHREGPTSSATLKDLESPCQERAVVLDSRSVEISQLKNTIKSLKQQKKQVEHQLEEEKKANIKKQKAKRVLEVQIQTLNIQKEELNTDLYHMKRSLRYFEEKSKDLAVRLQHSLQRKGELESVLSDVMATQKKKANQLSSPSKAGTEWKLEQSMREEALLKVQLTQLKESFQQLQLERHEYAEHLKGERARWQQRMRKMSQEICTLKKEKQQDMRRVEKLERSLSKLKNQMAEPLPPEPPAVPSEVELQHLRKELERVAGALQAQVKNNQRISLLNRGQEERIREQEERLRKQEERIQEQHKSLQQLAKPQSVFEEPNNENKSALQLEQQVKELQEKLGEEHLEAASQQNQQLTAQLSLMALPGEGHGGEHLDSEGEEAPQPMPSVPEDLESREAMSSFMDHLEEKADLSELVKKKELCFIHHWRERCHQKTHHLLSEPGGRAKDAALGGGHHQAGAQGGDEGEAAGAAADGIAAYSNYNNGHRKFLAAAHNPADEPGPGAPAPQELGAADKHGDLCEVSLTSSAQGEAREDPLLDKPTAQPIVQDHQEHPGLGSNCCVPFFCWAWLPRRRR.

Residues 1–77 (MAEETQHNKL…SSATLKDLES (77 aa)) form a disordered region. The segment covering 38 to 50 (TNGSIPQTATSGG) has biased composition (polar residues). 2 coiled-coil regions span residues 86-154 (LDSR…HMKR) and 209-421 (KLEQ…SLMA). Positions 352-362 (KQEERIQEQHK) are enriched in basic and acidic residues. 4 disordered regions span residues 352-383 (KQEE…ENKS), 423-445 (PGEG…PMPS), 496-524 (LSEP…DEGE), and 550-569 (AHNP…ELGA). Gly residues predominate over residues 508–520 (LGGGHHQAGAQGG). The golgi-targeting domain stretch occupies residues 529–632 (AADGIAAYSN…CWAWLPRRRR (104 aa)). A compositionally biased stretch (low complexity) spans 555–568 (DEPGPGAPAPQELG).

Belongs to the GOLGA8 family.

It is found in the golgi apparatus. Its subcellular location is the golgi stack membrane. Its function is as follows. May be involved in maintaining Golgi structure. In Homo sapiens (Human), this protein is Putative golgin subfamily A member 8I.